Consider the following 252-residue polypeptide: 3-dehydroquinate dehydratase (252 aa).

3-dehydroquinate-binding positions include Ser-21, 46 to 48 (EWR), and Arg-82. His-143 acts as the Proton donor/acceptor in catalysis. The Schiff-base intermediate with substrate role is filled by Lys-170. 3-dehydroquinate is bound by residues Arg-213, Ser-232, and Gln-236.

This sequence belongs to the type-I 3-dehydroquinase family. Homodimer.

The enzyme catalyses 3-dehydroquinate = 3-dehydroshikimate + H2O. It functions in the pathway metabolic intermediate biosynthesis; chorismate biosynthesis; chorismate from D-erythrose 4-phosphate and phosphoenolpyruvate: step 3/7. Its function is as follows. Involved in the third step of the chorismate pathway, which leads to the biosynthesis of aromatic amino acids. Catalyzes the cis-dehydration of 3-dehydroquinate (DHQ) and introduces the first double bond of the aromatic ring to yield 3-dehydroshikimate. The protein is 3-dehydroquinate dehydratase of Escherichia coli (strain K12 / MC4100 / BW2952).